Consider the following 4168-residue polypeptide: Centrosome-associated protein ALMS1 (4168 aa).

Positions 1 to 29 are enriched in acidic residues; the sequence is MEPEDLPWPGELEEEEEEEEEEEEEEEEA. A disordered region spans residues 1 to 69; that stretch reads MEPEDLPWPG…YGPQHLESID (69 aa). Positions 30 to 40 are enriched in low complexity; it reads AAAAAANVDDV. Positions 49–58 are enriched in basic and acidic residues; it reads EAGRELDSDS. Ser464 is subject to Phosphoserine. 34 tandem repeats follow at residues 539–585, 586–632, 633–679, 680–726, 727–774, 775–821, 822–871, 872–918, 919–965, 966–1013, 1014–1060, 1061–1107, 1108–1155, 1156–1202, 1203–1249, 1250–1297, 1298–1344, 1345–1392, 1393–1439, 1440–1486, 1487–1534, 1535–1581, 1582–1628, 1629–1675, 1676–1722, 1723–1769, 1770–1816, 1817–1861, 1862–1906, 1907–1951, 1952–1999, 2060–2105, 2106–2152, and 2153–2200. A 34 X 47 AA approximate tandem repeat region spans residues 539–2200; the sequence is QKTLADTHLT…HGENHKLVSE (1662 aa). Disordered regions lie at residues 558–579 and 606–625; these read PEPA…SHRG and GLAD…YSHR. Composition is skewed to polar residues over residues 564–574 and 609–622; these read KTATPTVLSSS and DQTT…STSY. 2 disordered regions span residues 699 to 718 and 735 to 769; these read SGPA…PHSH and QTEE…QREK. Positions 705–715 are enriched in polar residues; that stretch reads KTGTATVLSTP. The disordered stretch occupies residues 841–865; the sequence is SGPADGKTGTPAVTSTSSASSSLGE. Disordered regions lie at residues 946–969, 983–1007, and 1027–1055; these read GTPT…QQEL, AIPG…SHRE, and LKVS…QREK. Residues 989–1003 show a composition bias toward polar residues; the sequence is DQKTVPTPTVPSGSF. A Phosphoserine modification is found at Ser1189. Residues 1221 to 1241 are disordered; sequence VLGPADQKTGTPTPTSASYSH. Over residues 1228-1240 the composition is skewed to polar residues; the sequence is KTGTPTPTSASYS. The interval 1786–1806 is disordered; that stretch reads SNVPGPADQKTGVSTVTSTSY. The span at 1796-1806 shows a compositional bias: low complexity; the sequence is TGVSTVTSTSY. Ser2143 carries the post-translational modification Phosphoserine. Disordered stretches follow at residues 2456–2477 and 2600–2621; these read ITDS…SSVD and HPCA…NPSS. Phosphoserine is present on Ser2466. Ser2632 carries the phosphoserine modification. Disordered regions lie at residues 2753–2828, 2892–2912, 3283–3310, 3389–3426, 3566–3594, and 3643–3704; these read HFTE…STRA, KAPR…QHQD, RQIP…AIAP, EAAQ…MKNL, QVRD…TTQH, and SLQV…HRAG. Over residues 2754–2766 the composition is skewed to basic and acidic residues; sequence FTEEQNPPRDLKQ. The span at 2767 to 2779 shows a compositional bias: polar residues; that stretch reads KTSSPSSFKMHSN. 2 stretches are compositionally biased toward basic and acidic residues: residues 2780–2793 and 2800–2816; these read SQDK…EGRR and VDFE…ERSD. Residue Ser2805 is modified to Phosphoserine. A compositionally biased stretch (polar residues) spans 2817-2828; the sequence is FTGSHSEPSTRA. Residues 3294 to 3305 are compositionally biased toward polar residues; that stretch reads DTTVESSHSGSN. The span at 3392–3404 shows a compositional bias: basic and acidic residues; sequence QAKEKESLQKDTA. Residues 3405-3416 show a composition bias toward low complexity; sequence DSSAAAAAEHSA. Composition is skewed to basic and acidic residues over residues 3649 to 3664 and 3680 to 3694; these read STHD…KEWS and KSLE…ELKK. A compositionally biased stretch (basic residues) spans 3695–3704; it reads SKVLSHHRAG. Residues 4036 to 4167 form an ALMS motif region; that stretch reads TLQESLQFHR…NQLLGRKVPW (132 aa).

This sequence belongs to the ALMS1 family. In terms of tissue distribution, expressed in all tissues tested including adipose and pancreas. Expressed by beta-cells of the islets in the pancreas (at protein level).

The protein resides in the cytoplasm. Its subcellular location is the cytoskeleton. It is found in the microtubule organizing center. It localises to the centrosome. The protein localises to the cilium basal body. The protein resides in the spindle pole. Functionally, involved in PCM1-dependent intracellular transport. Required, directly or indirectly, for the localization of NCAPD2 to the proximal ends of centrioles. Required for proper formation and/or maintenance of primary cilia (PC), microtubule-based structures that protrude from the surface of epithelial cells. The polypeptide is Centrosome-associated protein ALMS1 (ALMS1) (Homo sapiens (Human)).